The chain runs to 37 residues: U12-myrmicitoxin-Mri1a (37 aa).

The signal sequence occupies residues 1–23; sequence MKTIELITIFAMITTLMVTVVAG. Residues 24–25 constitute a propeptide that is removed on maturation; it reads DP. V35 is modified (valine amide).

In terms of tissue distribution, expressed by the venom gland.

It is found in the secreted. In terms of biological role, toxin that induces mild paralysis, and reduces survival and reproduction when injected into aphids (A.pisum). May affect various processes in the aphid, including wound healing and hemolymph coagulation. It does not increase the sensitivity of the aphids to the chemical insecticides imidacloprid, methomyl and Spirotetramat. Has no insecticidal activity when injected into blowfly (L.caesar). Does not display any antibacterial or antifungal activity. This chain is U12-myrmicitoxin-Mri1a, found in Manica rubida (European giant red ant).